The primary structure comprises 101 residues: 2-amino-4-ketopentanoate thiolase alpha subunit (101 aa).

It belongs to the OrtA family. As to quaternary structure, heterodimer with OrtB.

The catalysed reaction is D-alanine + acetyl-CoA = (2R)-2-amino-4-oxopentanoate + CoA. Functionally, involved in the ornithine fermentation pathway. Catalyzes the thiolytic cleavage of 2-amino-4-ketopentanoate (AKP) with coenzyme A (CoA) to form acetyl-CoA and alanine. It is strictly specific for AKP. This is 2-amino-4-ketopentanoate thiolase alpha subunit from Unknown prokaryotic organism.